Here is a 78-residue protein sequence, read N- to C-terminus: UPF0349 protein BH3414 (78 aa).

It belongs to the UPF0349 family.

This chain is UPF0349 protein BH3414, found in Halalkalibacterium halodurans (strain ATCC BAA-125 / DSM 18197 / FERM 7344 / JCM 9153 / C-125) (Bacillus halodurans).